A 523-amino-acid chain; its full sequence is Sensory neuron membrane protein 1 (523 aa).

Over 1–11 the chain is Cytoplasmic; it reads MQLPRELKYAA. A helical transmembrane segment spans residues 12–32; that stretch reads IAGGVALFGLIFGWVLFPTIL. Residues 33–458 lie on the Extracellular side of the membrane; sequence KSQLKKEMAL…HQLFIPKRVV (426 aa). N-linked (GlcNAc...) asparagine glycosylation is present at Asn229. Intrachain disulfides connect Cys268–Cys333, Cys297–Cys352, and Cys335–Cys341. Asn440 carries an N-linked (GlcNAc...) asparagine glycan. Residues 459–479 traverse the membrane as a helical segment; that stretch reads GVLRWWMVSFGSLGAVIGIVF. The Cytoplasmic portion of the chain corresponds to 480–523; that stretch reads HFRDHIMRLAVSGDTKVSKVIPEVEEQKDISVIGQAQEPAKVNI.

Belongs to the CD36 family.

The protein localises to the cell membrane. In terms of biological role, plays an olfactory role that is not restricted to pheromone sensitivity. This Helicoverpa assulta (Oriental tobacco budworm) protein is Sensory neuron membrane protein 1.